The primary structure comprises 259 residues: 4-hydroxy-tetrahydrodipicolinate reductase (259 aa).

Residues 9-14 (GAGGRM) and Glu35 contribute to the NAD(+) site. Arg36 provides a ligand contact to NADP(+). NAD(+) is bound by residues 92 to 94 (GTT) and 116 to 119 (APNM). His149 (proton donor/acceptor) is an active-site residue. Residue His150 coordinates (S)-2,3,4,5-tetrahydrodipicolinate. Lys153 (proton donor) is an active-site residue. 159 to 160 (GT) contacts (S)-2,3,4,5-tetrahydrodipicolinate.

Belongs to the DapB family.

The protein localises to the cytoplasm. It carries out the reaction (S)-2,3,4,5-tetrahydrodipicolinate + NAD(+) + H2O = (2S,4S)-4-hydroxy-2,3,4,5-tetrahydrodipicolinate + NADH + H(+). The enzyme catalyses (S)-2,3,4,5-tetrahydrodipicolinate + NADP(+) + H2O = (2S,4S)-4-hydroxy-2,3,4,5-tetrahydrodipicolinate + NADPH + H(+). It functions in the pathway amino-acid biosynthesis; L-lysine biosynthesis via DAP pathway; (S)-tetrahydrodipicolinate from L-aspartate: step 4/4. Its function is as follows. Catalyzes the conversion of 4-hydroxy-tetrahydrodipicolinate (HTPA) to tetrahydrodipicolinate. This is 4-hydroxy-tetrahydrodipicolinate reductase from Nitratidesulfovibrio vulgaris (strain DP4) (Desulfovibrio vulgaris).